We begin with the raw amino-acid sequence, 110 residues long: Mobility group protein 1B (110 aa).

The HMG box DNA-binding region spans 5-71; it reads PKRPLSAYML…NYIRALQEYE (67 aa). A compositionally biased stretch (basic and acidic residues) spans 71-81; sequence ERNGGGGDDKG. A disordered region spans residues 71–110; sequence ERNGGGGDDKGKKRKGAAPKKGAGKKSKKGAHSDDDGDSE. Residues 82–100 are compositionally biased toward basic residues; sequence KKRKGAAPKKGAGKKSKKG.

Belongs to the HMGB family.

Its subcellular location is the nucleus. It localises to the chromosome. Functionally, found in condensed chromomeres. Binds preferentially to AT-rich DNA. The sequence is that of Mobility group protein 1B (HMG1B) from Chironomus tentans (Midge).